Reading from the N-terminus, the 149-residue chain is MAEIGIFVGTMYGNSLLVAEEAEAILTAQGHKATVFEDPELSDWLPYQDKYVLVVTSTTGQGDLPDSIVPLFQGIKDSLGFQPNLRYGVIALGDSSYVNFCNGGKQFDALLQEQSAQRVGEMLLIDASENPEPETESNPWVEQWGTLLS.

The 142-residue stretch at 4–145 folds into the Flavodoxin-like domain; the sequence is IGIFVGTMYG…ESNPWVEQWG (142 aa). Residues 10–15 and 99–101 contribute to the FMN site; these read TMYGNS and NFC.

Belongs to the flavodoxin family. MioC subfamily. As to quaternary structure, monomer. The cofactor is FMN.

Its function is as follows. Probable electron transporter. The chain is Flavodoxin YqcA (yqcA) from Escherichia coli (strain K12).